Reading from the N-terminus, the 4454-residue chain is MKVDRTKLKKTPTEAPADCRALIDKLKVCNDEQLLLELQQIKTWNIGKCELYHWVDLLDRFDGILADAGQTVENMSWMLVCDRPEKEQLKMLLLAVLNFTALLIEYSFSRHLYSSIEHLTTLLASSDMQVVLAVLNLLYVFSKRSNYITRLGSDKRTPLLTRLQHLAESWGGKENGFGLAECCRDLQMLKYPPSATTLHFEFYADPGAEVKIEKRTTSNTLHYIHIEQLDKISESPSEIMESLTKMYSIPKDKQMLLFTHIRLAHGFSNHRKRLQAVQARLHAISILVYSNALQESANSILYNGLIEELVDVLQITDKQLMEIKAASLRTLTSIVHLERTPKLSSIIDCTGTASYHGFLPVLVRNCIQAMIDPSMDPYPHQFATALFSFLYHLASYDAGGEALVSCGMMEALLKVIKFLGDEQDQITFVTRAVRVVDLITNLDMAAFQSHSGLSIFIYRLEHEVDLCRKECPFVIKPKIQRPSTTQEGEEMETDMDVADVTMESSPGSSISMEHRLDVELRASSSNSSTSISGPGPGPGPGPGPGPGPGPGPGPGPGLGPSLGPGPGPGPRPGVQCIPQRAALLKSMLNFLKKAIQDPAFSDGIRHVMDGSLPTSLKHIISNAEYYGPSLFLLATEVVTVFVFQEPSLLSSLQDNGLTDVMLHALLIKDVPATREVLGSLPNVFSALCLNARGLQSFVQCQPFERLFKVLLSPDYLPAMRRRRSSDPLGDTASNLGSAVDELMRHQPTLKTDATTAIIKLLEEICNLGRDPKYICQKPSIQKADGTTSAPPPRSNHAAEEASSEDEEEEEVQAMQSFNSAQQNETEPNQQVVGTEERIPIPLMDYILNVMKFVESILSNNTTDDHCQEFVNQKGLLPLVTILGLPNLPIDFPTSAACQAVAGVCKSILTLSHEPKVLQEGLLQLDLILSSLEPLHRPIESPGGSVLLRELACAGNVADATLSAQATPLLHALTAAHAYIMMFVHTCRVGQSEIRSISVNQWGSQLGLSVLSKLSQLYCSLVWESTVLLSLCTPNSLPSGCEFGQADMQKLVPKDEKAGTTQGGKRSDGEQDGTAGSMDASAQGLLEGIELDGDTLAPMETDEPSSSDSKGKSKITPAMAARIKQIKPLLSASSRLGRALAELFGLLVKLCVGSPVRQRRSHHAASTTTAPTPAARSTASALTKLLTKGLSWQPPPYTPTPRFRLTFFICSVGFTSPMLFDERKYPYHLMLQKFLCSGGHNALFETFNWALSMGGKVPVSEGLEHSDLPDGTGEFLDAWLMLVEKMVNPTTVLESPHSLPAKLPGGVQSFPQFSALRFLVVTQKAAFTCIKNLWNRKPLKVYGGRMAESMLAILCHILRGEPVIRERLSKEKEGSRGEEEAGQEEGGSRREPQVNQQQLQQLMDMGFTREHAMEALLNTSTMEQATEYLLTHPPPIIGGVVRDLSMSEEDQMMRAIAMSLGQDIPMDQRAESPEEVACRKEEEERKAREKQEEEEAKCLEKFQDADPLEQDELHTFTDTMLPGCFHLLDELPDTVYRVCDLIMTAIKRNGADYRDMILKQVVNQVWEAADVLIKAALPLTTSDTKTVSEWISQMATLPQASNLATRILLLTLLFEELKLPCAWVVESSGILNVLIKLLEVVQPCLQAAKEQKEVQTPKWITPVLLLIDFYEKTAISSKRRAQMTKYLQSNSNNWRWFDDRSGRWCSYSASNNSTIDSAWKSGETSVRFTAGRRRYTVQFTTMVQVNEETGNRRPVMLTLLRVPRLSKNSKSSNGQELEKTLEESKETDIKRKENKGNDIPLALESTNTEKDASLEETKIGEILIQGLTEDMVTVLIRACVSMLGVPVDPDTLHATLRLCLRLTRDHKYAMMFAELKSTRMILNLTQSSGFNGFTPLVTLLLRHIIEDPCTLRHTMEKVVRSAATSGAGSTTSGVVSGSLGSREINYILRVLGPAACRNPDIFTEVANCCIRIALPAPRGSGTASDDEFENLRIKGPNAVQLVKTTPLKPSSLPVIPDTIKEVIYDMLNALAAYHAPEEADKSDPKPGGMTQEVGQLLQDMGDDVYQQYRSLTRQSSDFDTQSGFSLNSQVFAADGAPAETSTTGTSQGEGASTPEETREGKKDKEGDRTSEEGKQKGKGSKPLMPTSTILRLLAELVRSYVGIATLIANYSYTVGQSELIKEDCSVLAFVLDHLLPHTQNAEDKDTPALARLFLASLAAAGSGTDAQVALVNEVKAALGRALAMAESTEKHARLQAVMCIISTIMESCPSTSSFYSSATAKTQHNGMNNIIRLFLKKGLVNDLARVPHSLDLSSPNMANTVNAALKPLETLSRIVNQPSSLFGSKSASSKSKSEQDAQGASQDSSSHQQDPGEPGEAEVQEEDHDVTQTEVADGDIMDGEAETDSVVIAGQPEVLSSQEMQVENELEDLIDELLERDGGSGNSTIIVSRSGEDESQEDVLMDEAPSNLSQASTLQANREDSMNILDPEDEEEHTQEEDSSGSNEDEDDSQDEEEEEEEDEEDDQEDDEGEEGDEDDDDDGSEMELDEDYPDMNASPLVRFERFDREDDLIIEFDNMFSSATDIPPSPGNIPTTHPLMVRHADHSSLTLGSGSSTTRLTQGIGRSQRTLRQLTANTGHTIHVHYPGNRQPNPPLILQRLLGPSAAADILQLSSSLPLQSRGRARLLVGNDDVHIIARSDDELLDDFFHDQSTATSQAGTLSSIPTALTRWTEECKVLDAESMHDCVSVVKVPIVNHLEFLRDEELEERREKRRKQLAEEETKIIDKGKEDKENRDQSAQCTVSKTNDSTEQNVSDGTPMPDSYPTTPSSTDAPTSESKETLGTLQPSQQQPTLPPPPSLGEISQELQSPAEEVGNSTQLLMPIELEELGPTRPSGEAETTQMELSPAPTITSLSPERAEDSDALTAVSSQLEGSPMDTSSLASCTLEEAVGDTPAAGSSEQPTAGSSTPGDAPSVGADVQGRPDVSRESTQPPEDSSPPASSESSSTRDSAVAISGADSRGILEEPLPSTSSEEEDPLAGISLPEGVDPSFLAALPDDIRREVLQNQLGIRPPTRTAPSTNSSTPAVVGNPGVTEVSPEFLAALPPAIQEEVLAQQRAEQQRRELAQNASSDTPMDPVTFIQTLPSDLRRSVLEDMEDSVLAVMPPDIAAEAQALRREQEARQRQLMHERLFGHSSTSALSAILRSPAFTSRLSGNRGVQYTRLAVQRGGTFQMGGSSSHNRPSGSNVDTLLRLRGRLLLDHEALSCLLVLLFVDEPKLNTSRLHRVLRNLCYHAQTRHWVIRSLLSILQRSSESELCIETPKLSTSEERGKKSSKSCASSSHENRPLDLLHKMESKSSNQLSWLSVSMDAALGCRTNIFQIQRSGGRKHTEKHASSGSTVHIHPQAAPVVCRHVLDTLIQLAKVFPSHFTQQRTKETNCESDRERGSKQACSPCSSQSSSSGICTDFWDLLVKLDNMNVSRKGKNSVKSVPVSAGGEGETSLHSLEASPLGQLMNMLSHPVIRRSSLLTEKLLRLLSLISIALPENKVSEVQTNSSNSGSSTAATSNTSTTTTTTTATAPTPTPPAATTPVTSAPALVAATAISTITVAASTTVTTPTTATTTVSTSTTKGNKSPAKVGEGGSSSVDFKMVSSGLTENQLQLSVEVLTSHSCSEEGLEDAANVLLQLSRGDSGTRDTVLKLLLNGARHLGYTLCKQIGTLLAELREYNLEQQRRAQCETLSPDGLPEEQPQTTKLKGKMQSRFDMAENVVIVASQKRPLGGRELQLPSMSMLTSKTSTQKFFLRVLQVIIQLRDDTRRANKKAKQTGRLGSSGLGSASSIQAAVRQLEAEADAIIQMVREGQRARRQQQAATSESSNQSETSVRREESPMDVDQPSPSAQDTQSIVVSDGTPQGEKEKEERPPELPLLSEQLSLDELWDMLGECLKELEESHDQHAVLVLQPAVEAFFLVHATERESKPPVRDTRESQLAHIKDEPPPLSPAPLTPATPSSLDPFFSREPSSMHISSSLPPDTQKFLRFAETHRTVLNQILRQSTTHLADGPFAVLVDYIRVLDFDVKRKYFRQELERLDEGLRKEDMAVHVRRDHVFEDSYRELHRKSPEEMKNRLYIVFEGEEGQDAGGLLREWYMIISREMFNPMYALFRTSPGDRVTYTINPSSHCNPNHLSYFKFVGRIVAKAVYDNRLLECYFTRSFYKHILGKSVRYTDMESEDYHFYQGLVYLLENDVSTLGYDLTFSTEVQEFGVCEVRDLKPNGANILVTEENKKEYVHLVCQMRMTGAIRKQLAAFLEGFYEIIPKRLISIFTEQELELLISGLPTIDIDDLKSNTEYHKYQSNSIQIQWFWRALRSFDQADRAKFLQFVTGTSKVPLQGFAALEGMNGIQKFQIHRDDRSTDRLPSAHTCFNQLDLPAYESFEKLRHMLLLAIQECSEGFGLA.

Residues 521-575 (RASSSNSSTSISGPGPGPGPGPGPGPGPGPGPGPGPGLGPSLGPGPGPGPRPGVQ) are disordered. Over residues 523 to 533 (SSSNSSTSISG) the composition is skewed to low complexity. Residues 535–571 (GPGPGPGPGPGPGPGPGPGPGPGLGPSLGPGPGPGPR) show a composition bias toward pro residues. Phosphoserine is present on residues serine 724 and serine 725. Disordered stretches follow at residues 781 to 834 (QKAD…VVGT), 1054 to 1077 (DEKA…AGSM), and 1094 to 1114 (TLAP…KSKI). Positions 801–811 (ASSEDEEEEEV) are enriched in acidic residues. Over residues 813 to 832 (AMQSFNSAQQNETEPNQQVV) the composition is skewed to polar residues. Serine 816 is subject to Phosphoserine. Position 1160 is a phosphoserine (serine 1160). Residues 1367-1378 (LSKEKEGSRGEE) are compositionally biased toward basic and acidic residues. A disordered region spans residues 1367 to 1396 (LSKEKEGSRGEEEAGQEEGGSRREPQVNQQ). Residues 1392-1431 (QVNQQQLQQLMDMGFTREHAMEALLNTSTMEQATEYLLTH) enclose the UBA domain. Residues serine 1444, serine 1446, serine 1458, and serine 1471 each carry the phosphoserine modification. The region spanning 1446–1465 (SEEDQMMRAIAMSLGQDIPM) is the UIM domain. Residues 1472–1491 (PEEVACRKEEEERKAREKQE) are disordered. A WWE domain is found at 1679–1756 (RAQMTKYLQS…ETGNRRPVML (78 aa)). Positions 1766 to 1802 (KNSKSSNGQELEKTLEESKETDIKRKENKGNDIPLAL) are disordered. Basic and acidic residues predominate over residues 1775–1795 (ELEKTLEESKETDIKRKENKG). Serine 1983 is modified (phosphoserine). Disordered stretches follow at residues 2095–2142 (APAE…SKPL), 2339–2420 (SLFG…QEMQ), and 2433–2556 (LERD…ASPL). Residues 2097-2112 (AETSTTGTSQGEGAST) are compositionally biased toward low complexity. Residue threonine 2112 is modified to Phosphothreonine. Residues 2114 to 2134 (EETREGKKDKEGDRTSEEGKQ) are compositionally biased toward basic and acidic residues. The segment covering 2339–2368 (SLFGSKSASSKSKSEQDAQGASQDSSSHQQ) has biased composition (low complexity). Position 2343 is a phosphoserine (serine 2343). Lysine 2344 bears the N6-acetyllysine mark. 2 stretches are compositionally biased toward acidic residues: residues 2372 to 2383 (EPGEAEVQEEDH) and 2391 to 2402 (ADGDIMDGEAET). A phosphoserine mark is found at serine 2439, serine 2442, and serine 2468. Positions 2465–2475 (SNLSQASTLQA) are enriched in polar residues. Positions 2485–2549 (DPEDEEEHTQ…SEMELDEDYP (65 aa)) are enriched in acidic residues. Phosphoserine occurs at positions 2604, 2609, and 2612. Threonine 2631 bears the Phosphothreonine mark. Residues serine 2661, serine 2672, and serine 2696 each carry the phosphoserine modification. Residues 2781 to 2793 (IIDKGKEDKENRD) show a composition bias toward basic and acidic residues. 2 disordered regions span residues 2781–3047 (IIDK…GVDP) and 3113–3136 (QQRA…MDPV). Polar residues predominate over residues 2794-2813 (QSAQCTVSKTNDSTEQNVSD). Over residues 2815 to 2849 (TPMPDSYPTTPSSTDAPTSESKETLGTLQPSQQQP) the composition is skewed to low complexity. The residue at position 2828 (threonine 2828) is a Phosphothreonine. Polar residues-rich tracts occupy residues 2895-2912 (AETT…TSLS), 2924-2941 (AVSS…SLAS), and 2954-2967 (AGSS…SSTP). Phosphoserine is present on residues serine 2903, serine 2910, serine 2912, serine 2938, serine 2964, and serine 2965. Phosphothreonine is present on threonine 2966. Low complexity predominate over residues 2990–3009 (PPEDSSPPASSESSSTRDSA). Serine 2995 carries the phosphoserine modification. Serine 3193, serine 3194, serine 3199, serine 3204, and serine 3212 each carry phosphoserine. At arginine 3226 the chain carries Omega-N-methylarginine. Disordered regions lie at residues 3320–3343 (PKLS…SHEN), 3431–3458 (QRTK…SQSS), 3482–3501 (GKNS…ETSL), 3548–3590 (SEVQ…TTPV), and 3615–3642 (TPTT…EGGS). Residues 3432–3446 (RTKETNCESDRERGS) show a composition bias toward basic and acidic residues. A compositionally biased stretch (low complexity) spans 3447-3458 (KQACSPCSSQSS). Low complexity-rich tracts occupy residues 3552-3579 (TNSS…ATAP) and 3615-3628 (TPTT…TSTT). A phosphoserine mark is found at serine 3633, serine 3740, serine 3830, serine 3835, serine 3837, and serine 3838. Positions 3815–3836 (TRRANKKAKQTGRLGSSGLGSA) are disordered. Residues 3826-3836 (GRLGSSGLGSA) are compositionally biased toward low complexity. 2 disordered regions span residues 3859 to 3927 (EGQR…LPLL) and 3974 to 4028 (RESK…SSSL). The span at 3871 to 3880 (TSESSNQSET) shows a compositional bias: polar residues. Phosphoserine is present on residues serine 3887, serine 3895, and serine 3907. The span at 3894–3905 (PSPSAQDTQSIV) shows a compositional bias: polar residues. Threonine 3910 carries the post-translational modification Phosphothreonine. Composition is skewed to basic and acidic residues over residues 3913-3922 (GEKEKEERPP) and 3974-3995 (RESK…KDEP). Phosphoserine occurs at positions 3986 and 3999. Positions 3996–4005 (PPLSPAPLTP) are enriched in pro residues. Threonine 4004 and threonine 4007 each carry phosphothreonine. Positions 4018 to 4028 (EPSSMHISSSL) are enriched in polar residues. Residues 4118-4454 (SPEEMKNRLY…QECSEGFGLA (337 aa)) enclose the HECT domain. At tyrosine 4351 the chain carries Phosphotyrosine. The Glycyl thioester intermediate role is filled by cysteine 4421.

It belongs to the UPL family. TOM1/PTR1 subfamily. As to quaternary structure, interacts with isoform p14ARF of CDKN2A which strongly inhibits HUWE1 ubiquitin ligase activity. Interacts with MYCN, POLB and CDC6. Interacts with isoform 2 of PA2G4. Interacts with NR1D1. Interacts with AMBRA1. Interacts with HAPSTR1. Interacts with HAPSTR2. In hepatocytes, interacts with PAQR3; the interaction promotes PPARA poylubiquitination and STUB1-mediated degradation. Post-translationally, phosphorylated on tyrosine, phosphorylation is probably required for its ability to inhibit TP53 transactivation. As to expression, widely expressed.

It is found in the cytoplasm. The protein resides in the nucleus. Its subcellular location is the mitochondrion. The catalysed reaction is S-ubiquitinyl-[E2 ubiquitin-conjugating enzyme]-L-cysteine + [acceptor protein]-L-lysine = [E2 ubiquitin-conjugating enzyme]-L-cysteine + N(6)-ubiquitinyl-[acceptor protein]-L-lysine.. Its pathway is protein modification; protein ubiquitination. E3 ubiquitin-protein ligase which mediates ubiquitination and subsequent proteasomal degradation of target proteins. Regulates apoptosis by catalyzing the polyubiquitination and degradation of MCL1. Mediates monoubiquitination of DNA polymerase beta (POLB) at 'Lys-41', 'Lys-61' and 'Lys-81', thereby playing a role in base-excision repair. Also ubiquitinates the p53/TP53 tumor suppressor and core histones including H1, H2A, H2B, H3 and H4. Ubiquitinates MFN2 to negatively regulate mitochondrial fusion in response to decreased stearoylation of TFRC. Ubiquitination of MFN2 also takes place following induction of mitophagy; AMBRA1 acts as a cofactor for HUWE1-mediated ubiquitination. Regulates neural differentiation and proliferation by catalyzing the polyubiquitination and degradation of MYCN. May regulate abundance of CDC6 after DNA damage by polyubiquitinating and targeting CDC6 to degradation. Mediates polyubiquitination of PA2G4. Acts in concert with MYCBP2 to regulate the circadian clock gene expression by promoting the lithium-induced ubiquination and degradation of NR1D1. Binds to an upstream initiator-like sequence in the preprodynorphin gene. Mediates HAPSTR1 degradation, but is also a required cofactor in the pathway by which HAPSTR1 governs stress signaling. Acts as a regulator of the JNK and NF-kappa-B signaling pathways by mediating assembly of heterotypic 'Lys-63'-/'Lys-48'-linked branched ubiquitin chains that are then recognized by TAB2: HUWE1 mediates branching of 'Lys-48'-linked chains of substrates initially modified with 'Lys-63'-linked conjugates by TRAF6. 'Lys-63'-/'Lys-48'-linked branched ubiquitin chains protect 'Lys-63'-linkages from CYLD deubiquitination. Ubiquitinates PPARA in hepatocytes. The protein is E3 ubiquitin-protein ligase HUWE1 (Huwe1) of Rattus norvegicus (Rat).